A 456-amino-acid chain; its full sequence is Histidine--tRNA ligase (456 aa).

The protein belongs to the class-II aminoacyl-tRNA synthetase family. As to quaternary structure, homodimer.

The protein resides in the cytoplasm. It carries out the reaction tRNA(His) + L-histidine + ATP = L-histidyl-tRNA(His) + AMP + diphosphate + H(+). The chain is Histidine--tRNA ligase from Borreliella afzelii (strain PKo) (Borrelia afzelii).